The sequence spans 501 residues: Probable histidine--tRNA ligase, mitochondrial (501 aa).

The tract at residues 32-54 (TNSNNNNNNNNNNNNNNNNNKNI) is disordered. The segment covering 33-54 (NSNNNNNNNNNNNNNNNNNKNI) has biased composition (low complexity).

It belongs to the class-II aminoacyl-tRNA synthetase family.

The protein localises to the mitochondrion matrix. The enzyme catalyses tRNA(His) + L-histidine + ATP = L-histidyl-tRNA(His) + AMP + diphosphate + H(+). The chain is Probable histidine--tRNA ligase, mitochondrial (mhisS) from Dictyostelium discoideum (Social amoeba).